Consider the following 549-residue polypeptide: MPSQDDVQNLPIDITFSRLGEWLVDRKRIPADWRKRVAVIRVKILKEFSSLPKEIDPFFQTLDPEVIGYLEVKKVYEILLKTTPESRNIFGRLSGASGVWEAIVRAFEKDHIYLGEAAQIIIQNVNYEIPYLKKQVQKVQQQMTELDRKEADIKRSVALSATKYEDACRELGLQGNNVRRELLETASSLPSTFSKILEVINSDSVTGAMEYYSAYVQDVHTEKDKPLRIVLQNLKYIRENPPSLSVFGDSEGLDADNIQSSENANGTDAAADSIDWDITVETPEIDWDVSMVEEVDSGNDLGSYEIVNASDIPENSPFKVEESQGLEVDVSEISWDVSVETPQVEEIGDSALLESNQTQLTDSTTQVLGSGGERSQLLETEYRNKILDDLYEVKAFLNQRLIELRNEDTLSLQHHVQAVSPMVLQQYSPETIEPMVVDISMAISLLTNKKSRDLIMILNSKRFLDRLVSELEEKKHREVKLRESLKDVGRRRMELQNSLSAIWPKQEAALSKTRELKELCETSLSSMFDGRPVNIRGEINTLLNAGVSA.

Short sequence motifs (shuffled ATG8-binding motif) lie at residues Ile274–Asp277, Ile285–Asp288, and Ile333–Asp336.

Belongs to the CDK5RAP3 family. In terms of assembly, substrate adapter component of the UFM1 ribosome E3 ligase (UREL) complex. Interacts with ATG8 family proteins.

Substrate adapter of E3 ligase complexes mediating ufmylation, the covalent attachment of the ubiquitin-like modifier UFM1 to substrate proteins, and which is involved in various processes, such as ribosome recycling and reticulophagy (also called ER-phagy). The sequence is that of CDK5RAP3 protein homolog from Arabidopsis thaliana (Mouse-ear cress).